A 374-amino-acid chain; its full sequence is tRNA-specific 2-thiouridylase MnmA (374 aa).

Residues 17–24 and methionine 43 contribute to the ATP site; that span reads GMSGGVDS. The interval 103–105 is interaction with target base in tRNA; that stretch reads NPD. The Nucleophile role is filled by cysteine 108. A disulfide bond links cysteine 108 and cysteine 204. Glycine 132 contacts ATP. The interaction with tRNA stretch occupies residues 154 to 156; the sequence is KDQ. Cysteine 204 (cysteine persulfide intermediate) is an active-site residue. Positions 316-317 are interaction with tRNA; the sequence is RY.

This sequence belongs to the MnmA/TRMU family.

Its subcellular location is the cytoplasm. The enzyme catalyses S-sulfanyl-L-cysteinyl-[protein] + uridine(34) in tRNA + AH2 + ATP = 2-thiouridine(34) in tRNA + L-cysteinyl-[protein] + A + AMP + diphosphate + H(+). Functionally, catalyzes the 2-thiolation of uridine at the wobble position (U34) of tRNA, leading to the formation of s(2)U34. This chain is tRNA-specific 2-thiouridylase MnmA, found in Pseudomonas entomophila (strain L48).